Consider the following 489-residue polypeptide: Cobyric acid synthase (489 aa).

Residues 252 to 441 (ALTIGVIQLP…IHGIFANTEF (190 aa)) form the GATase cobBQ-type domain. Cys-330 (nucleophile) is an active-site residue. His-433 is a catalytic residue.

It belongs to the CobB/CobQ family. CobQ subfamily.

It participates in cofactor biosynthesis; adenosylcobalamin biosynthesis. In terms of biological role, catalyzes amidations at positions B, D, E, and G on adenosylcobyrinic A,C-diamide. NH(2) groups are provided by glutamine, and one molecule of ATP is hydrogenolyzed for each amidation. The sequence is that of Cobyric acid synthase from Herpetosiphon aurantiacus (strain ATCC 23779 / DSM 785 / 114-95).